The sequence spans 84 residues: NADH dehydrogenase [ubiquinone] 1 alpha subcomplex subunit 3 (84 aa).

At A2 the chain carries N-acetylalanine. The chain crosses the membrane as a helical span at residues 19–39 (LVVSFSVWGLAIIMPMISPYT). Residues 59–84 (DDGNMPDVPSHPQDPLGPSLDWLKNL) form a disordered region.

Belongs to the complex I NDUFA3 subunit family. Complex I is composed of 45 different subunits.

It is found in the mitochondrion inner membrane. Functionally, accessory subunit of the mitochondrial membrane respiratory chain NADH dehydrogenase (Complex I), that is believed not to be involved in catalysis. Complex I functions in the transfer of electrons from NADH to the respiratory chain. The immediate electron acceptor for the enzyme is believed to be ubiquinone. The polypeptide is NADH dehydrogenase [ubiquinone] 1 alpha subcomplex subunit 3 (Ndufa3) (Mus musculus (Mouse)).